The chain runs to 869 residues: DNA mismatch repair protein MutS (869 aa).

An ATP-binding site is contributed by 619–626 (GPNMAGKS).

It belongs to the DNA mismatch repair MutS family.

Functionally, this protein is involved in the repair of mismatches in DNA. It is possible that it carries out the mismatch recognition step. This protein has a weak ATPase activity. The sequence is that of DNA mismatch repair protein MutS from Caldanaerobacter subterraneus subsp. tengcongensis (strain DSM 15242 / JCM 11007 / NBRC 100824 / MB4) (Thermoanaerobacter tengcongensis).